Here is a 219-residue protein sequence, read N- to C-terminus: Response regulator ArlR (219 aa).

The 114-residue stretch at 3–116 folds into the Response regulatory domain; the sequence is NILIVEDEQN…ELLARIRAVL (114 aa). A 4-aspartylphosphate modification is found at Asp-52. The segment at residues 122–219 is a DNA-binding region (ompR/PhoB-type); sequence KDVLDINGII…TVRGVGYVIR (98 aa).

Post-translationally, phosphorylated by ArlS.

The protein localises to the cytoplasm. Functionally, member of the two-component regulatory system ArlS/ArlR. This chain is Response regulator ArlR (arlR), found in Staphylococcus epidermidis (strain ATCC 12228 / FDA PCI 1200).